An 84-amino-acid polypeptide reads, in one-letter code: Three-finger toxin 3FTx-1 (84 aa).

An N-terminal signal peptide occupies residues 1-21 (MKTLLLTLVVVTIVCLDLGNS). 4 cysteine pairs are disulfide-bonded: cysteine 24/cysteine 41, cysteine 34/cysteine 59, cysteine 63/cysteine 71, and cysteine 72/cysteine 77. N-linked (GlcNAc...) asparagine glycosylation is present at asparagine 78.

The protein belongs to the three-finger toxin family. Short-chain subfamily. As to expression, expressed by the venom gland.

The protein localises to the secreted. This is Three-finger toxin 3FTx-1 from Micrurus corallinus (Brazilian coral snake).